A 248-amino-acid chain; its full sequence is 2,3-bisphosphoglycerate-dependent phosphoglycerate mutase (248 aa).

Residues 8-15 (RHGESTWN), 21-22 (TG), R60, 87-90 (ERHY), K98, 114-115 (RR), and 183-184 (GN) each bind substrate. Residue H9 is the Tele-phosphohistidine intermediate of the active site. E87 functions as the Proton donor/acceptor in the catalytic mechanism.

Belongs to the phosphoglycerate mutase family. BPG-dependent PGAM subfamily. Homodimer.

The enzyme catalyses (2R)-2-phosphoglycerate = (2R)-3-phosphoglycerate. It functions in the pathway carbohydrate degradation; glycolysis; pyruvate from D-glyceraldehyde 3-phosphate: step 3/5. Catalyzes the interconversion of 2-phosphoglycerate and 3-phosphoglycerate. This chain is 2,3-bisphosphoglycerate-dependent phosphoglycerate mutase, found in Paraburkholderia phytofirmans (strain DSM 17436 / LMG 22146 / PsJN) (Burkholderia phytofirmans).